A 298-amino-acid chain; its full sequence is ATP phosphoribosyltransferase (298 aa).

It belongs to the ATP phosphoribosyltransferase family. Long subfamily. Mg(2+) is required as a cofactor.

It is found in the cytoplasm. The catalysed reaction is 1-(5-phospho-beta-D-ribosyl)-ATP + diphosphate = 5-phospho-alpha-D-ribose 1-diphosphate + ATP. It functions in the pathway amino-acid biosynthesis; L-histidine biosynthesis; L-histidine from 5-phospho-alpha-D-ribose 1-diphosphate: step 1/9. With respect to regulation, feedback inhibited by histidine. In terms of biological role, catalyzes the condensation of ATP and 5-phosphoribose 1-diphosphate to form N'-(5'-phosphoribosyl)-ATP (PR-ATP). Has a crucial role in the pathway because the rate of histidine biosynthesis seems to be controlled primarily by regulation of HisG enzymatic activity. In Aliivibrio salmonicida (strain LFI1238) (Vibrio salmonicida (strain LFI1238)), this protein is ATP phosphoribosyltransferase.